Reading from the N-terminus, the 218-residue chain is Large ribosomal subunit protein bL25 (218 aa).

A disordered region spans residues 186 to 218 (AVEEEVPAEDEEIMPEPEVIGEEDEGDEEEPEE).

The protein belongs to the bacterial ribosomal protein bL25 family. CTC subfamily. As to quaternary structure, part of the 50S ribosomal subunit; part of the 5S rRNA/L5/L18/L25 subcomplex. Contacts the 5S rRNA. Binds to the 5S rRNA independently of L5 and L18.

Functionally, this is one of the proteins that binds to the 5S RNA in the ribosome where it forms part of the central protuberance. The protein is Large ribosomal subunit protein bL25 of Halothermothrix orenii (strain H 168 / OCM 544 / DSM 9562).